Reading from the N-terminus, the 909-residue chain is Protein translocase subunit SecA (909 aa).

ATP contacts are provided by residues Q87 and 105–109 (GEGKT). Residues 246 to 265 (LEQQEKEDEEGKNGDGDYTI) are disordered. Over residues 254–265 (EEGKNGDGDYTI) the composition is skewed to basic and acidic residues. ATP is bound at residue D512. Residues 834–858 (ESDVEAVEEQRRQADEQPKQYEHET) show a composition bias toward basic and acidic residues. A disordered region spans residues 834 to 899 (ESDVEAVEEQ…NDPCPCGSGL (66 aa)). The span at 859–875 (ASATQAPEQAPEAAPAA) shows a compositional bias: low complexity. Residues C893, C895, C904, and H905 each coordinate Zn(2+).

The protein belongs to the SecA family. In terms of assembly, monomer and homodimer. Part of the essential Sec protein translocation apparatus which comprises SecA, SecYEG and auxiliary proteins SecDF-YajC and YidC. Requires Zn(2+) as cofactor.

Its subcellular location is the cell inner membrane. The protein localises to the cytoplasm. It carries out the reaction ATP + H2O + cellular proteinSide 1 = ADP + phosphate + cellular proteinSide 2.. In terms of biological role, part of the Sec protein translocase complex. Interacts with the SecYEG preprotein conducting channel. Has a central role in coupling the hydrolysis of ATP to the transfer of proteins into and across the cell membrane, serving both as a receptor for the preprotein-SecB complex and as an ATP-driven molecular motor driving the stepwise translocation of polypeptide chains across the membrane. This is Protein translocase subunit SecA from Pseudoalteromonas atlantica (strain T6c / ATCC BAA-1087).